Reading from the N-terminus, the 112-residue chain is MESKAIAKFQRVSPRKTRLVAKNVQGLGVEEAMNLLRFTPNKPAGVLYGVLKSALANASQLGGVDVDAMVVKEVVVNEGPTWKRFMPRAQGRATKINKRTSHITVILAEGQE.

Belongs to the universal ribosomal protein uL22 family. In terms of assembly, part of the 50S ribosomal subunit.

In terms of biological role, this protein binds specifically to 23S rRNA; its binding is stimulated by other ribosomal proteins, e.g. L4, L17, and L20. It is important during the early stages of 50S assembly. It makes multiple contacts with different domains of the 23S rRNA in the assembled 50S subunit and ribosome. Its function is as follows. The globular domain of the protein is located near the polypeptide exit tunnel on the outside of the subunit, while an extended beta-hairpin is found that lines the wall of the exit tunnel in the center of the 70S ribosome. The polypeptide is Large ribosomal subunit protein uL22 (Desulfovibrio desulfuricans (strain ATCC 27774 / DSM 6949 / MB)).